Consider the following 224-residue polypeptide: UPF0758 protein IL0240 (224 aa).

The MPN domain maps to 102-224 (GFTEPTMVKD…PISFAERGLL (123 aa)). Zn(2+) contacts are provided by H173, H175, and D186. The short motif at 173-186 (HNHPSGVAEPSQAD) is the JAMM motif element.

The protein belongs to the UPF0758 family.

The chain is UPF0758 protein IL0240 from Idiomarina loihiensis (strain ATCC BAA-735 / DSM 15497 / L2-TR).